The primary structure comprises 698 residues: ATP-dependent RNA helicase DHX33 (698 aa).

Disordered stretches follow at residues Met1–Pro20 and Thr29–Ser50. The segment at Met1–Arg71 is required for nucleolar location. Over residues Ala30 to Arg40 the composition is skewed to gly residues. The Helicase ATP-binding domain maps to Leu75–Glu243. Residue Gly88–Thr95 participates in ATP binding. Residues Asp185–His188 carry the DEAH box motif. One can recognise a Helicase C-terminal domain in the interval Gln271–Lys441. Residues Ala462–Leu553 are HA2; required for interaction with EIF3G and RPL26. The short motif at Val536–His550 is the Critical for rDNA-binding element.

The protein belongs to the DEAD box helicase family. DEAH subfamily. In terms of assembly, interacts with UBTF. Interacts with DDX3X, EIF3G and EIF3H; the interaction is independent of RNA. Interacts (via HA2 region and Helicase C-terminal domain) with the components of the large ribosomal subunit RPL3, RPL7, RPL26 and RPL27. Binds to mRNA. Interacts (via the helicase C-terminal domain) with MAVS. Binds to double-stranded RNA (via the helicase C-terminal domain). In terms of processing, ubiquitinated, leading to its degradation by the proteasome. Deubiquitinated by USP36.

The protein resides in the nucleus. It is found in the nucleolus. The protein localises to the nucleoplasm. It localises to the cytoplasm. Its subcellular location is the inflammasome. It catalyses the reaction ATP + H2O = ADP + phosphate + H(+). In terms of biological role, implicated in nucleolar organization, ribosome biogenesis, protein synthesis and cytoplasmic dsRNA sensing. Stimulates RNA polymerase I transcription of the 47S precursor rRNA. Associates with ribosomal DNA (rDNA) loci where it is involved in POLR1A recruitment. In the cytoplasm, promotes elongation-competent 80S ribosome assembly at the late stage of mRNA translation initiation. Senses cytosolic dsRNA mediating NLRP3 inflammasome formation in macrophages and type I interferon production in myeloid dendritic cells. Required for NLRP3 activation induced by viral dsRNA and bacterial RNA. In dendritic cells, required for induction of type I interferon production induced by cytoplasmic dsRNA via the activation of MAPK and NF-kappa-B signaling pathways. The polypeptide is ATP-dependent RNA helicase DHX33 (Mus musculus (Mouse)).